The following is a 219-amino-acid chain: Protein P25 (219 aa).

The short motif at 57–62 (KRIRFR) is the Nuclear localization signal element. Residues 103-146 (DPTRLDSSVNELLVSNGLVTHYDRVHNVPIHTDGFEVVDFTTVF) form a transcription activation region. The Nuclear export signal signature appears at 169–178 (VYMVCLVNTV).

This sequence belongs to the benyvirus P25 protein family. In terms of assembly, homooligomer.

Its subcellular location is the host cytoplasm. It is found in the host nucleus. Pathogenicity factor implicated in symptom exacerbation. Might function as transcription activator (Potential). This is Protein P25 from Beet necrotic yellow vein virus (isolate Japan/S) (BNYVV).